The primary structure comprises 668 residues: DNA ligase (668 aa).

NAD(+) is bound by residues 32 to 36 (DAEYD), 81 to 82 (SL), and Glu-111. Lys-113 functions as the N6-AMP-lysine intermediate in the catalytic mechanism. Positions 134, 171, 290, and 314 each coordinate NAD(+). Residues Cys-408, Cys-411, Cys-426, and Cys-432 each contribute to the Zn(2+) site. The BRCT domain maps to 591–668 (EEDLSLKGQT…DEEALIAILS (78 aa)).

The protein belongs to the NAD-dependent DNA ligase family. LigA subfamily. Requires Mg(2+) as cofactor. Mn(2+) is required as a cofactor.

The catalysed reaction is NAD(+) + (deoxyribonucleotide)n-3'-hydroxyl + 5'-phospho-(deoxyribonucleotide)m = (deoxyribonucleotide)n+m + AMP + beta-nicotinamide D-nucleotide.. Its function is as follows. DNA ligase that catalyzes the formation of phosphodiester linkages between 5'-phosphoryl and 3'-hydroxyl groups in double-stranded DNA using NAD as a coenzyme and as the energy source for the reaction. It is essential for DNA replication and repair of damaged DNA. The protein is DNA ligase of Shewanella pealeana (strain ATCC 700345 / ANG-SQ1).